We begin with the raw amino-acid sequence, 490 residues long: Type I restriction enzyme EcoEI methylase subunit (490 aa).

Residues 163 to 168, 193 to 195, and E226 contribute to the S-adenosyl-L-methionine site; these read EFYTPR and TGG.

Belongs to the N(4)/N(6)-methyltransferase family. As to quaternary structure, the type I restriction/modification system is composed of three polypeptides R, M and S; the restriction enzyme has stoichiometry R(2)M(2)S(1) while the methyltransferase is M(2)S(1).

The enzyme catalyses a 2'-deoxyadenosine in DNA + S-adenosyl-L-methionine = an N(6)-methyl-2'-deoxyadenosine in DNA + S-adenosyl-L-homocysteine + H(+). In terms of biological role, the subtype gamma methyltransferase (M) subunit of a type I restriction enzyme. The M and S subunits together form a methyltransferase (MTase) that methylates two adenine residues of the sequence 5'-GAGN(7)ATGC-3'. In the presence of the R subunit the complex can also act as an endonuclease, binding to the same target sequence but cutting the DNA some distance from this site. Whether the DNA is cut or modified depends on the methylation state of the target sequence. When the target site is unmodified, the DNA is cut. When the target site is hemimethylated, the complex acts as a maintenance MTase modifying the DNA so that both strands become methylated. After locating a non-methylated recognition site, the enzyme complex serves as a molecular motor that translocates DNA in an ATP-dependent manner until a collision occurs that triggers cleavage. This chain is Type I restriction enzyme EcoEI methylase subunit (hsdM), found in Escherichia coli.